Here is a 399-residue protein sequence, read N- to C-terminus: Phosphoglycerate kinase (399 aa).

Residues 21 to 23, Arg-37, 60 to 63, Arg-119, and Arg-152 each bind substrate; these read DFN and HLGR. ATP is bound by residues Lys-205, Gly-296, Glu-327, and 353 to 356; that span reads GGDT.

It belongs to the phosphoglycerate kinase family. Monomer.

Its subcellular location is the cytoplasm. The enzyme catalyses (2R)-3-phosphoglycerate + ATP = (2R)-3-phospho-glyceroyl phosphate + ADP. The protein operates within carbohydrate degradation; glycolysis; pyruvate from D-glyceraldehyde 3-phosphate: step 2/5. The sequence is that of Phosphoglycerate kinase from Sulfurimonas denitrificans (strain ATCC 33889 / DSM 1251) (Thiomicrospira denitrificans (strain ATCC 33889 / DSM 1251)).